Reading from the N-terminus, the 283-residue chain is Non-selective voltage-gated ion channel VDAC3 (283 aa).

Cys-2 is modified (N-acetylcysteine). The residue at position 4 (Thr-4) is a Phosphothreonine. Lys-12, Lys-15, and Lys-20 each carry N6-acetyllysine. The next 2 beta stranded transmembrane spans lie at 26 to 35 and 39 to 47; these read MVKIDLKTKS and VEFSTSGHA. Lys-53 participates in a covalent cross-link: Glycyl lysine isopeptide (Lys-Gly) (interchain with G-Cter in ubiquitin). 3 beta stranded membrane-spanning segments follow: residues 54–64, 69–76, and 80–89; these read ASGNLETKYKV, LTFTQKWN, and TLGTEISWEN. Position 90 is an N6-acetyllysine (Lys-90). The chain crosses the membrane as a beta stranded span at residues 95–104; it reads LKLTLDTIFV. Glycyl lysine isopeptide (Lys-Gly) (interchain with G-Cter in ubiquitin) cross-links involve residues Lys-109 and Lys-110. 10 beta stranded membrane-spanning segments follow: residues 111 to 120, 123 to 130, 137 to 145, 150 to 158, 163 to 175, 178 to 185, 189 to 198, 202 to 211, 218 to 227, and 231 to 238; these read SGKLKASYRR, FSLGSNVD, TIYGWAVLA, LAGYQMSFD, KLSQ…GYKA, FQLHTHVN, EFGGSIYQKV, IETSINLAWT, RFGIAAKYKL, and TSLSAKVN. Residue Ser-241 is modified to Phosphoserine. Residues 242–244 and 260–264 each bind NAD(+); these read LIG and SALID. 2 beta stranded membrane passes run 242 to 251 and 254 to 263; these read LIGLGYTQTL and GVKLTLSALI. Lys-266 is modified (N6-acetyllysine; alternate). Lys-266 participates in a covalent cross-link: Glycyl lysine isopeptide (Lys-Gly) (interchain with G-Cter in ubiquitin); alternate. The chain crosses the membrane as a beta stranded span at residues 273-282; it reads HKVGLGFELE.

This sequence belongs to the eukaryotic mitochondrial porin family. In terms of assembly, interacts with ARMC12 in a TBC1D21-dependent manner. Interacts with MISFA. In terms of processing, ubiquitinated by PRKN during mitophagy, leading to its degradation and enhancement of mitophagy. Deubiquitinated by USP30. Highest levels of expression detected in testis, less but still abundant expression in heart, kidney, brain, and skeletal muscle.

Its subcellular location is the mitochondrion outer membrane. The protein resides in the membrane. The catalysed reaction is chloride(in) = chloride(out). It carries out the reaction K(+)(in) = K(+)(out). Its function is as follows. Non-selective voltage-gated ion channel that mediates the transport of anions and cations through the mitochondrion outer membrane and plasma membrane. Forms a high-conducting channel with a stable open state and a voltage-induced closure with a mild preference for anions over cations. Involved in male fertility and sperm mitochondrial sheath formation. This chain is Non-selective voltage-gated ion channel VDAC3, found in Mus musculus (Mouse).